Here is a 481-residue protein sequence, read N- to C-terminus: NADH-quinone oxidoreductase subunit N (481 aa).

Transmembrane regions (helical) follow at residues 11 to 31, 38 to 58, 74 to 94, 103 to 123, 128 to 148, 163 to 183, 208 to 228, 241 to 261, 272 to 292, 300 to 322, 332 to 352, 368 to 388, 404 to 424, and 450 to 470; these read ALPE…DLWA, WTHY…LAVW, GMSR…FVYA, IFKG…SVMV, FLTA…LIAL, FVLG…VYGA, LGLV…PFHM, VTAL…FRIL, WSLM…LAAI, MLAY…GAVG, TYAL…DGDN, VWLA…PPLM, GYVW…FYYL, and SLLS…QTVI.

This sequence belongs to the complex I subunit 2 family. As to quaternary structure, NDH-1 is composed of 14 different subunits. Subunits NuoA, H, J, K, L, M, N constitute the membrane sector of the complex.

The protein localises to the cell inner membrane. The enzyme catalyses a quinone + NADH + 5 H(+)(in) = a quinol + NAD(+) + 4 H(+)(out). Its function is as follows. NDH-1 shuttles electrons from NADH, via FMN and iron-sulfur (Fe-S) centers, to quinones in the respiratory chain. The immediate electron acceptor for the enzyme in this species is believed to be ubiquinone. Couples the redox reaction to proton translocation (for every two electrons transferred, four hydrogen ions are translocated across the cytoplasmic membrane), and thus conserves the redox energy in a proton gradient. In Neisseria gonorrhoeae (strain ATCC 700825 / FA 1090), this protein is NADH-quinone oxidoreductase subunit N.